Reading from the N-terminus, the 919-residue chain is Probable disease resistance protein At4g27220 (919 aa).

2 coiled-coil regions span residues 1–30 (MFRS…LKRS) and 74–95 (VEIL…KKIS). The NB-ARC domain occupies 121-399 (MLDKLKDCLK…AEGLLDGQHH (279 aa)). 141-148 (GMGGVGKT) is a binding site for ATP. LRR repeat units follow at residues 447-468 (GEGF…QDKF), 469-492 (VSSV…VIEG), 494-516 (ETLV…FLQA), 519-540 (NLRI…FSNL), 542-564 (SLRS…ESLV), 565-587 (KLQF…EALS), 588-610 (SLRY…TILQ), and 611-635 (LSSL…EREG).

Belongs to the disease resistance NB-LRR family.

In terms of biological role, probable disease resistance protein. In Arabidopsis thaliana (Mouse-ear cress), this protein is Probable disease resistance protein At4g27220.